Consider the following 1403-residue polypeptide: Nidogen-2 (1403 aa).

A signal peptide spans 1–30; it reads MFRDPTAGWLTPPSPLSLLVMLLLLSRVGA. Residues 108–274 enclose the NIDO domain; it reads PFLADIDTSH…GVWAFHIGSR (167 aa). The segment at 323–403 is disordered; it reads EDVEYPPVEP…KQGRPVGEGE (81 aa). Ser-386 and Ser-475 each carry an O-linked (Xyl...) (chondroitin sulfate) serine glycan. Residues 386-395 are compositionally biased toward polar residues; the sequence is SASLDPQTKQ. In terms of domain architecture, EGF-like 1 spans 507–547; the sequence is NLETCEHSHGRCSQHAFCTDYTTGFCCHCQSRFYGNGKHCL. 3 disulfide bridges follow: Cys-511–Cys-524, Cys-518–Cys-533, and Cys-535–Cys-546. The region spanning 551–781 is the Nidogen G2 beta-barrel domain; that stretch reads APHRVNGKVS…GPVEVDSAPV (231 aa). Asn-681, Asn-716, and Asn-726 each carry an N-linked (GlcNAc...) asparagine glycan. The region spanning 782–823 is the EGF-like 2 domain; it reads GVNPCYDGSHTCDTTARCHPGTGVDYTCECTPGFQGDGRSCV. 18 disulfides stabilise this stretch: Cys-786–Cys-799, Cys-793–Cys-809, Cys-811–Cys-822, Cys-828–Cys-841, Cys-835–Cys-850, Cys-852–Cys-865, Cys-875–Cys-890, Cys-882–Cys-900, Cys-902–Cys-913, Cys-919–Cys-930, Cys-924–Cys-939, Cys-941–Cys-952, Cys-968–Cys-991, Cys-1002–Cys-1009, Cys-1011–Cys-1033, Cys-1047–Cys-1071, Cys-1082–Cys-1089, and Cys-1091–Cys-1112. An EGF-like 3; calcium-binding domain is found at 824-862; sequence DVNECATGFHRCGPNSVCVNLVGSYRCECRSGYEFADDQ. In terms of domain architecture, EGF-like 4 spans 871-914; sequence PPNPCLDGSHTCAPEGQARCIHHGGSSFSCACLPGFIGTGHQCS. The 39-residue stretch at 915–953 folds into the EGF-like 5; calcium-binding domain; it reads DVDECAENRCHEAAICYNTPGSFSCRCQPGYRGDGFHCT. The short motif at 946–948 is the Cell attachment site element; the sequence is RGD. Thyroglobulin type-1 domains follow at residues 965-1033 and 1044-1112; these read LKPC…PPHC and RTVC…RPAC. Residues 1021–1043 are disordered; sequence GTQTPPGSTPPHCGPPPEPTQRP. Over residues 1027 to 1040 the composition is skewed to pro residues; sequence GSTPPHCGPPPEPT. Asn-1152 is a glycosylation site (N-linked (GlcNAc...) asparagine). LDL-receptor class B repeat units lie at residues 1182-1225, 1226-1268, 1269-1313, 1314-1355, and 1357-1401; these read RMVY…DHFR, RTMY…DPIR, GNLY…DPFS, KLLC…YADH, and YHTD…CPTG. Arg-1336 carries the omega-N-methylarginine modification.

As to quaternary structure, interacts with LAMA2. Interacts with COL13A1. Interacts with EFEMP2. In terms of processing, highly N- and O-glycosylated.

It localises to the secreted. It is found in the extracellular space. The protein localises to the extracellular matrix. Its subcellular location is the basement membrane. Functionally, cell adhesion glycoprotein. Might be involved in osteoblast differentiation. It probably has a role in cell-extracellular matrix interactions. The chain is Nidogen-2 (Nid2) from Mus musculus (Mouse).